Reading from the N-terminus, the 84-residue chain is Defensin-like protein 49 (84 aa).

The signal sequence occupies residues 1–29 (MGITKSLMIFFHIVLLAVSLSNNIILTSG). 4 cysteine pairs are disulfide-bonded: cysteine 40/cysteine 82, cysteine 44/cysteine 68, cysteine 54/cysteine 80, and cysteine 58/cysteine 81.

Belongs to the DEFL family.

Its subcellular location is the secreted. This chain is Defensin-like protein 49, found in Arabidopsis thaliana (Mouse-ear cress).